Here is a 97-residue protein sequence, read N- to C-terminus: Co-chaperonin GroES (97 aa).

It belongs to the GroES chaperonin family. Heptamer of 7 subunits arranged in a ring. Interacts with the chaperonin GroEL.

Its subcellular location is the cytoplasm. Its function is as follows. Together with the chaperonin GroEL, plays an essential role in assisting protein folding. The GroEL-GroES system forms a nano-cage that allows encapsulation of the non-native substrate proteins and provides a physical environment optimized to promote and accelerate protein folding. GroES binds to the apical surface of the GroEL ring, thereby capping the opening of the GroEL channel. In Elusimicrobium minutum (strain Pei191), this protein is Co-chaperonin GroES.